Here is a 30-residue protein sequence, read N- to C-terminus: V-type proton ATPase catalytic subunit A isoform 2 (30 aa).

The protein belongs to the ATPase alpha/beta chains family. As to quaternary structure, V-ATPase is a heteromultimeric enzyme composed of a peripheral catalytic V1 complex (main components: subunits A, B, C, D, E, and F) attached to an integral membrane V0 proton pore complex (main component: the proteolipid protein).

It catalyses the reaction ATP + H2O + 4 H(+)(in) = ADP + phosphate + 5 H(+)(out). In terms of biological role, catalytic subunit of the peripheral V1 complex of vacuolar ATPase. V-ATPase vacuolar ATPase is responsible for acidifying a variety of intracellular compartments in eukaryotic cells. This is V-type proton ATPase catalytic subunit A isoform 2 from Equisetum arvense (Field horsetail).